The chain runs to 380 residues: Probable polyglutamine synthesis accessory protein MT0602 (380 aa).

The protein belongs to the CapA family.

Functionally, could be involved in the biosynthesis, transport or localization of poly-alpha-L-glutamine (PLG), a cell wall component. Contributes to stress tolerance and virulence. The protein is Probable polyglutamine synthesis accessory protein MT0602 of Mycobacterium tuberculosis (strain CDC 1551 / Oshkosh).